The following is a 551-amino-acid chain: Adenine deaminase (551 aa).

It belongs to the metallo-dependent hydrolases superfamily. Adenine deaminase family. Mn(2+) is required as a cofactor.

It carries out the reaction adenine + H2O + H(+) = hypoxanthine + NH4(+). The protein is Adenine deaminase of Methanosarcina barkeri (strain Fusaro / DSM 804).